The primary structure comprises 212 residues: MFLDELISEFDRGLRSMTGVSRMSRPLPVPQESKVTEPAVELSPAERAHAAGLMRVNHVGEVCAQALYQAQKLATKSPSLRAVFDRAAIEEEDHLAWTSKRLEALDSRPSLLNPLWYTGALAIGLAAGRMGDRVSLGFMAETERQVELHLDSHLDELPAADHESRAIVEQMRVDEAEHGKAAMEAGGLELPFPARALMRAVSKVMTRTAYYI.

Glutamate 61, glutamate 91, histidine 94, glutamate 143, glutamate 175, and histidine 178 together coordinate Fe cation.

This sequence belongs to the COQ7 family. Fe cation serves as cofactor.

Its subcellular location is the cell membrane. The enzyme catalyses a 5-methoxy-2-methyl-3-(all-trans-polyprenyl)benzene-1,4-diol + AH2 + O2 = a 3-demethylubiquinol + A + H2O. The protein operates within cofactor biosynthesis; ubiquinone biosynthesis. Functionally, catalyzes the hydroxylation of 2-nonaprenyl-3-methyl-6-methoxy-1,4-benzoquinol during ubiquinone biosynthesis. This chain is 3-demethoxyubiquinol 3-hydroxylase, found in Paraburkholderia phytofirmans (strain DSM 17436 / LMG 22146 / PsJN) (Burkholderia phytofirmans).